The primary structure comprises 69 residues: uncharacterized protein (69 aa).

An N-terminal signal peptide occupies residues 1 to 16 (MKKIMLFLAMTSILSA). Residue C17 is the site of N-palmitoyl cysteine attachment. C17 carries the S-diacylglycerol cysteine lipid modification.

It is found in the cell membrane. This is an uncharacterized protein from Bacillus subtilis (strain 168).